The sequence spans 209 residues: Uracil phosphoribosyltransferase (209 aa).

5-phospho-alpha-D-ribose 1-diphosphate-binding positions include arginine 79, arginine 104, and 131–139; that span reads DPMLATGGS. Uracil-binding positions include isoleucine 194 and 199–201; that span reads GDA. Aspartate 200 is a binding site for 5-phospho-alpha-D-ribose 1-diphosphate.

This sequence belongs to the UPRTase family. It depends on Mg(2+) as a cofactor.

It carries out the reaction UMP + diphosphate = 5-phospho-alpha-D-ribose 1-diphosphate + uracil. Its pathway is pyrimidine metabolism; UMP biosynthesis via salvage pathway; UMP from uracil: step 1/1. With respect to regulation, allosterically activated by GTP. In terms of biological role, catalyzes the conversion of uracil and 5-phospho-alpha-D-ribose 1-diphosphate (PRPP) to UMP and diphosphate. This Bacillus pumilus (strain SAFR-032) protein is Uracil phosphoribosyltransferase.